The following is a 141-amino-acid chain: Galactose-6-phosphate isomerase subunit LacA (141 aa).

Belongs to the LacAB/RpiB family. Heteromultimeric protein consisting of LacA and LacB.

It catalyses the reaction aldehydo-D-galactose 6-phosphate = keto-D-tagatose 6-phosphate. The protein operates within carbohydrate metabolism; D-galactose 6-phosphate degradation; D-tagatose 6-phosphate from D-galactose 6-phosphate: step 1/1. The protein is Galactose-6-phosphate isomerase subunit LacA of Streptococcus equi subsp. equi (strain 4047).